The sequence spans 133 residues: MAKEFGRPQRVAQEMQKEIALILQREIKDPRVGMMTTVSGVEMSRDLAYAKVFVTFLNDQDEAAVKNGIKALQEASGFIRSLLGKAMRLRIVPELTFFYDNSLVEGMRMSNLVTNVVKHDEERRVNPDDSKED.

It belongs to the RbfA family. As to quaternary structure, monomer. Binds 30S ribosomal subunits, but not 50S ribosomal subunits or 70S ribosomes.

It is found in the cytoplasm. One of several proteins that assist in the late maturation steps of the functional core of the 30S ribosomal subunit. Associates with free 30S ribosomal subunits (but not with 30S subunits that are part of 70S ribosomes or polysomes). Required for efficient processing of 16S rRNA. May interact with the 5'-terminal helix region of 16S rRNA. This is Ribosome-binding factor A from Salmonella typhi.